An 839-amino-acid chain; its full sequence is V-type proton ATPase 116 kDa subunit a 1 (839 aa).

Residues 1 to 395 (MGELFRSEEM…DAYGIGTYRE (395 aa)) are Cytoplasmic-facing. 2 positions are modified to phosphothreonine: T257 and T367. Phosphotyrosine is present on Y371. Residues 396–414 (INPAPYTVITFPFLFAVMF) form a helical membrane-spanning segment. Residues 415 to 416 (GD) lie on the Vacuolar side of the membrane. The chain crosses the membrane as a helical span at residues 417 to 433 (FGHGILMTLFAVWMVLR). Residues 434-448 (ESRILSQKHENEMFS) are Cytoplasmic-facing. Residues 449–478 (MVFSGRYIILLMGLFSIYTGLIYNDCFSKS) traverse the membrane as a helical segment. Topologically, residues 479 to 542 (LNIFGSSWSV…ATNKLTFLNS (64 aa)) are vacuolar. Residues 543 to 562 (FKMKMSVILGIIHMLFGVSL) traverse the membrane as a helical segment. The Cytoplasmic portion of the chain corresponds to 563-580 (SLFNHIYFKKPLNIYFGF). A helical transmembrane segment spans residues 581–601 (IPEIIFMSSLFGYLVILIFYK). The Vacuolar portion of the chain corresponds to 602 to 646 (WTAYDAHSSRNAPSLLIHFINMFLFSYPESGNAMLYSGQKGIQCF). Residues 647–666 (LIVVAMLCVPWMLLFKPLIL) form a helical membrane-spanning segment. Residues 667 to 726 (RHQYLRKKHLGTLNFGGIRVGNGPTEEDAEIIQHDQLSTHSEDAEEFDFGDTMVHQAIHT) lie on the Cytoplasmic side of the membrane. The chain crosses the membrane as a helical span at residues 727–751 (IEYCLGCISNTASYLRLWALSLAHA). Residues 752–772 (QLSEVLWTMVIHIGLHVRSLA) are Vacuolar-facing. Residues 773–811 (GGLGLFFIFAAFATLTVAILLIMEGLSAFLHALRLHWVE) form a helical membrane-spanning segment. The Cytoplasmic portion of the chain corresponds to 812-839 (FQNKFYTGTGFKFLPFSFEHIREGKFDE).

It belongs to the V-ATPase 116 kDa subunit family. As to quaternary structure, V-ATPase is a heteromultimeric enzyme made up of two complexes: the ATP-hydrolytic V1 complex and the proton translocation V0 complex. The V1 complex consists of three catalytic AB heterodimers that form a heterohexamer, three peripheral stalks each consisting of EG heterodimers, one central rotor including subunits D and F, and the regulatory subunits C and H. The proton translocation complex V0 consists of the proton transport subunit a, a ring of proteolipid subunits c9c'', rotary subunit d, subunits e and f, and the accessory subunits ATP6AP1/Ac45 and ATP6AP2/PRR. Interacts with SPAAR. As to expression, predominantly expressed in neurons in the cortex and in the dentate gyrus, CA1 and CA3 regions of the hippocampus (at protein level). Expressed at lower levels in astrocytes, oligodendrocytes and microglia (at protein level). In the cerebellum, present in Purkinje and granule cells (at protein level).

The protein resides in the cytoplasmic vesicle. The protein localises to the clathrin-coated vesicle membrane. It localises to the secretory vesicle. It is found in the synaptic vesicle membrane. Its subcellular location is the melanosome. Its function is as follows. Subunit of the V0 complex of vacuolar(H+)-ATPase (V-ATPase), a multisubunit enzyme composed of a peripheral complex (V1) that hydrolyzes ATP and a membrane integral complex (V0) that translocates protons. V-ATPase is responsible for the acidification of various organelles, such as lysosomes, endosomes, the trans-Golgi network, and secretory granules, including synaptic vesicles. In certain cell types, can be exported to the plasma membrane, where it is involved in the acidification of the extracellular environment. Required for assembly and activity of the vacuolar ATPase. Through its action on compartment acidification, plays an essential role in neuronal development in terms of integrity and connectivity of neurons. The polypeptide is V-type proton ATPase 116 kDa subunit a 1 (Atp6v0a1) (Mus musculus (Mouse)).